The sequence spans 201 residues: Large ribosomal subunit protein uL4 (201 aa).

A disordered region spans residues 44-71; the sequence is RAQKTRAEVTGSGKKPWRQKGTGRARSG.

This sequence belongs to the universal ribosomal protein uL4 family. As to quaternary structure, part of the 50S ribosomal subunit.

Its function is as follows. One of the primary rRNA binding proteins, this protein initially binds near the 5'-end of the 23S rRNA. It is important during the early stages of 50S assembly. It makes multiple contacts with different domains of the 23S rRNA in the assembled 50S subunit and ribosome. Functionally, forms part of the polypeptide exit tunnel. The polypeptide is Large ribosomal subunit protein uL4 (Pectobacterium carotovorum subsp. carotovorum (strain PC1)).